A 240-amino-acid polypeptide reads, in one-letter code: Proteasome subunit alpha (240 aa).

Belongs to the peptidase T1A family. As to quaternary structure, the 20S proteasome core is composed of 14 alpha and 14 beta subunits that assemble into four stacked heptameric rings, resulting in a barrel-shaped structure. The two inner rings, each composed of seven catalytic beta subunits, are sandwiched by two outer rings, each composed of seven alpha subunits. The catalytic chamber with the active sites is on the inside of the barrel. Has a gated structure, the ends of the cylinder being occluded by the N-termini of the alpha-subunits. Is capped by the proteasome-associated ATPase, ARC.

It localises to the cytoplasm. The protein operates within protein degradation; proteasomal Pup-dependent pathway. The formation of the proteasomal ATPase ARC-20S proteasome complex, likely via the docking of the C-termini of ARC into the intersubunit pockets in the alpha-rings, may trigger opening of the gate for substrate entry. Interconversion between the open-gate and close-gate conformations leads to a dynamic regulation of the 20S proteasome proteolysis activity. Its function is as follows. Component of the proteasome core, a large protease complex with broad specificity involved in protein degradation. This chain is Proteasome subunit alpha, found in Frankia casuarinae (strain DSM 45818 / CECT 9043 / HFP020203 / CcI3).